Reading from the N-terminus, the 365-residue chain is Heme A synthase (365 aa).

Helical transmembrane passes span 17–37 (AVRIWLTVVAALIAVMVLVGG), 107–127 (VIGIAYLLPFLWFLWRGAIGP), 132–152 (ALWGIFALGALQGAVGWWMVA), 164–184 (VRLAVHLTLALIIYAAIVWTL), 203–223 (AIALLALTLLQLFLGALVAGL), 264–283 (QFDHRMMAYALWALAAWHAI), 296–316 (GALWLFAALSLQAVLGILTVL), and 320–340 (PIGLALAHQAVGIVVLTLAVL). His267 provides a ligand contact to heme. His327 lines the heme pocket.

The protein belongs to the COX15/CtaA family. Type 2 subfamily. As to quaternary structure, interacts with CtaB. Heme b serves as cofactor.

The protein localises to the cell membrane. It carries out the reaction Fe(II)-heme o + 2 A + H2O = Fe(II)-heme a + 2 AH2. It participates in porphyrin-containing compound metabolism; heme A biosynthesis; heme A from heme O: step 1/1. Catalyzes the conversion of heme O to heme A by two successive hydroxylations of the methyl group at C8. The first hydroxylation forms heme I, the second hydroxylation results in an unstable dihydroxymethyl group, which spontaneously dehydrates, resulting in the formyl group of heme A. The chain is Heme A synthase from Rhodopseudomonas palustris (strain HaA2).